The following is an 870-amino-acid chain: Protein csx2 (870 aa).

The interval 212-251 is disordered; the sequence is TSPEISDAPPLSGNVDPLPINSPPLTNPVARDIDQTEPED. Residues 510-614 form the PH domain; it reads TSAKQGLLLA…WIEAIQYSIS (105 aa). Phosphoserine occurs at positions 625, 653, and 655. Positions 647–672 are disordered; it reads RVASVTSPSRHNSDSKEKKQTKSPSL. The segment covering 657–666 has biased composition (basic and acidic residues); it reads HNSDSKEKKQ. The Arf-GAP domain occupies 670 to 791; it reads PSLVKTLKEM…RFIKSSFSHD (122 aa). The C4-type zinc-finger motif lies at 686–710; it reads CADCNTTARVEWCAINFPVVLCIDC.

This Schizosaccharomyces pombe (strain 972 / ATCC 24843) (Fission yeast) protein is Protein csx2 (csx2).